The chain runs to 151 residues: Large ribosomal subunit protein bL17 (151 aa).

The segment at 118-151 (EAKQPPRKEKAKKPAPVQAEEASATPASEEKAQD) is disordered. Low complexity predominate over residues 131 to 144 (PAPVQAEEASATPA).

This sequence belongs to the bacterial ribosomal protein bL17 family. As to quaternary structure, part of the 50S ribosomal subunit. Contacts protein L32.

This chain is Large ribosomal subunit protein bL17, found in Syntrophobacter fumaroxidans (strain DSM 10017 / MPOB).